The sequence spans 367 residues: Alginate lyase (367 aa).

Residues 1–24 form the signal peptide; sequence MTLLKRISSPALLALALFGGAAHA. Substrate contacts are provided by residues 63-64, 136-137, and Y254; these read SK and HT.

Belongs to the polysaccharide lyase 5 family.

Its subcellular location is the periplasm. It catalyses the reaction Eliminative cleavage of alginate to give oligosaccharides with 4-deoxy-alpha-L-erythro-hex-4-enuronosyl groups at their non-reducing ends and beta-D-mannuronate at their reducing end.. Its function is as follows. Catalyzes the depolymerization of alginate by cleaving the beta-1,4 glycosidic bond between two adjacent sugar residues via a beta-elimination mechanism. May serve to degrade mislocalized alginate that is trapped in the periplasmic space. In Pseudomonas putida (strain GB-1), this protein is Alginate lyase.